The following is a 551-amino-acid chain: MELANICNATIAKGIAVQKDSYGGYGVYIVDPGALVGCNDPKLGGDKIELLRVSSVFNVKNLMEAMNALEGEYAEDGQRAADMFKSIIGSSIEELSAVSETCLLVYFMMVIYLMGEQGYAVPMKISRYIDTVLLGTTVNNASNCIESMLIHYEHVALFHELDNNLQKLHKTLISKMPSKKNYSIELLRQIYSATVSRVLEIPQELHEENYMDNYVVTPSLVPILDYVNHGDKTSRNAYYDVDRRKGDIILYLDLTVVNPGKLKPNTEVLITYKDIEDSLAMITKYGFDPANYTTTGTKIFSCTFDKMYLSTNKFDNEIDIRNFYQWFSINPSLQFVLNSENEWLINDSLAEFERLLVPFATSSQRNEHYWIYSDGDDARKRFMEYFDIDEVEDEDEAWAQLETQFKWFESSENDLMPFPPCVWTVKSKFLKEKEATGYELEKVIQNKLENSRALYNETTNQFQAYLENYLDYRIDVLQEYSPEDTENENAVSQLIARELSVLLKIRDRINNNKSIFLNSEDKKYAKLPLLPTKNVERPPWLSEGDDDFDQD.

The region spanning 46–273 (DKIELLRVSS…PNTEVLITYK (228 aa)) is the SET domain. An SET-like region spans residues 184-288 (IELLRQIYSA…LAMITKYGFD (105 aa)).

This sequence belongs to the class V-like SAM-binding methyltransferase superfamily.

It localises to the cytoplasm. The protein resides in the cytosol. The catalysed reaction is L-lysyl-[cytochrome c] + S-adenosyl-L-methionine = N(6)-methyl-L-lysyl-[cytochrome c] + S-adenosyl-L-homocysteine + H(+). Methyltransferase which mediates trimethylation of cytochrome c (CYC1). In Candida glabrata (strain ATCC 2001 / BCRC 20586 / JCM 3761 / NBRC 0622 / NRRL Y-65 / CBS 138) (Yeast), this protein is Cytochrome c lysine N-methyltransferase 1 (CTM1).